A 933-amino-acid polypeptide reads, in one-letter code: Isoleucine--tRNA ligase (933 aa).

The 'HIGH' region signature appears at 57–67 (PYANGNIHVGH). Glutamate 554 provides a ligand contact to L-isoleucyl-5'-AMP. Residues 595–599 (KMSKS) carry the 'KMSKS' region motif. Lysine 598 is an ATP binding site.

The protein belongs to the class-I aminoacyl-tRNA synthetase family. IleS type 1 subfamily. Monomer.

The protein resides in the cytoplasm. The enzyme catalyses tRNA(Ile) + L-isoleucine + ATP = L-isoleucyl-tRNA(Ile) + AMP + diphosphate. Functionally, catalyzes the attachment of isoleucine to tRNA(Ile). As IleRS can inadvertently accommodate and process structurally similar amino acids such as valine, to avoid such errors it has two additional distinct tRNA(Ile)-dependent editing activities. One activity is designated as 'pretransfer' editing and involves the hydrolysis of activated Val-AMP. The other activity is designated 'posttransfer' editing and involves deacylation of mischarged Val-tRNA(Ile). This chain is Isoleucine--tRNA ligase, found in Streptococcus pyogenes serotype M18 (strain MGAS8232).